The following is a 168-amino-acid chain: MSKEAIAQKAAIVDEVAEQLKESVSAIVVDSRGLTVAEVTDLRKQLRDAGIKLRVIKNKVLTRAAEKAGFEGMDDVFVGPSAVAFSEEDAVAPAKILKTFADSNDNLSIKGGIIEGEVADIDTINTFATLPSREDLLAMLANEFMSPVRDVAYALKAVADKKSEEDAA.

The protein belongs to the universal ribosomal protein uL10 family. In terms of assembly, part of the ribosomal stalk of the 50S ribosomal subunit. The N-terminus interacts with L11 and the large rRNA to form the base of the stalk. The C-terminus forms an elongated spine to which L12 dimers bind in a sequential fashion forming a multimeric L10(L12)X complex.

Functionally, forms part of the ribosomal stalk, playing a central role in the interaction of the ribosome with GTP-bound translation factors. The sequence is that of Large ribosomal subunit protein uL10 from Pediococcus pentosaceus (strain ATCC 25745 / CCUG 21536 / LMG 10740 / 183-1w).